The chain runs to 466 residues: ATP synthase subunit beta (466 aa).

Residue 156–163 (GGAGVGKT) coordinates ATP.

It belongs to the ATPase alpha/beta chains family. As to quaternary structure, F-type ATPases have 2 components, CF(1) - the catalytic core - and CF(0) - the membrane proton channel. CF(1) has five subunits: alpha(3), beta(3), gamma(1), delta(1), epsilon(1). CF(0) has three main subunits: a(1), b(2) and c(9-12). The alpha and beta chains form an alternating ring which encloses part of the gamma chain. CF(1) is attached to CF(0) by a central stalk formed by the gamma and epsilon chains, while a peripheral stalk is formed by the delta and b chains.

The protein localises to the cell membrane. The enzyme catalyses ATP + H2O + 4 H(+)(in) = ADP + phosphate + 5 H(+)(out). Its function is as follows. Produces ATP from ADP in the presence of a proton gradient across the membrane. The catalytic sites are hosted primarily by the beta subunits. In Polynucleobacter asymbioticus (strain DSM 18221 / CIP 109841 / QLW-P1DMWA-1) (Polynucleobacter necessarius subsp. asymbioticus), this protein is ATP synthase subunit beta.